The following is a 242-amino-acid chain: Myogenic factor 6 (242 aa).

A disordered region spans residues 31-63 (SPLYPGSDGTLSPCQDQMPPEAGSDSSGEEHVL). The 52-residue stretch at 93 to 144 (DRRKAATLRERRRLKKINEAFEALKRRTVANPNQRLPKVEILRSAINYIERL) folds into the bHLH domain.

As to quaternary structure, efficient DNA binding requires dimerization with another bHLH protein.

It localises to the nucleus. In terms of biological role, involved in muscle differentiation (myogenic factor). Induces fibroblasts to differentiate into myoblasts. Probable sequence specific DNA-binding protein. The chain is Myogenic factor 6 (MYF6) from Sus scrofa (Pig).